The sequence spans 542 residues: CTP synthase (542 aa).

The tract at residues 1–266 (MATNYIFVTG…DDLICQRFRL (266 aa)) is amidoligase domain. CTP is bound at residue Ser-14. Residue Ser-14 coordinates UTP. ATP contacts are provided by residues 15–20 (SLGKGI) and Asp-72. Mg(2+)-binding residues include Asp-72 and Glu-140. CTP is bound by residues 147-149 (DIE), 187-192 (KTKPTQ), and Lys-223. UTP is bound by residues 187–192 (KTKPTQ) and Lys-223. Residue 239-241 (KDV) participates in ATP binding. Positions 291–542 (TIGMVGKYVE…VKAAKENQKK (252 aa)) constitute a Glutamine amidotransferase type-1 domain. Gly-352 lines the L-glutamine pocket. The active-site Nucleophile; for glutamine hydrolysis is Cys-379. Residues 380–383 (LGMQ), Glu-403, and Arg-470 each bind L-glutamine. Active-site residues include His-515 and Glu-517.

The protein belongs to the CTP synthase family. In terms of assembly, homotetramer.

It carries out the reaction UTP + L-glutamine + ATP + H2O = CTP + L-glutamate + ADP + phosphate + 2 H(+). The catalysed reaction is L-glutamine + H2O = L-glutamate + NH4(+). The enzyme catalyses UTP + NH4(+) + ATP = CTP + ADP + phosphate + 2 H(+). It functions in the pathway pyrimidine metabolism; CTP biosynthesis via de novo pathway; CTP from UDP: step 2/2. With respect to regulation, allosterically activated by GTP, when glutamine is the substrate; GTP has no effect on the reaction when ammonia is the substrate. The allosteric effector GTP functions by stabilizing the protein conformation that binds the tetrahedral intermediate(s) formed during glutamine hydrolysis. Inhibited by the product CTP, via allosteric rather than competitive inhibition. In terms of biological role, catalyzes the ATP-dependent amination of UTP to CTP with either L-glutamine or ammonia as the source of nitrogen. Regulates intracellular CTP levels through interactions with the four ribonucleotide triphosphates. The sequence is that of CTP synthase from Mannheimia succiniciproducens (strain KCTC 0769BP / MBEL55E).